We begin with the raw amino-acid sequence, 41 residues long: Large ribosomal subunit protein bL36 (41 aa).

The protein belongs to the bacterial ribosomal protein bL36 family.

This Methylobacterium nodulans (strain LMG 21967 / CNCM I-2342 / ORS 2060) protein is Large ribosomal subunit protein bL36.